We begin with the raw amino-acid sequence, 271 residues long: Peroxiredoxin-4 (271 aa).

The first 37 residues, 1–37 (MEALPLLAATTPDHGRHRRLLLLPLLLFLLPAGAVQG), serve as a signal peptide directing secretion. The region spanning 79–237 (AKISKPAPYW…TLRLVQAFQY (159 aa)) is the Thioredoxin domain. Residue Cys-124 is the Cysteine sulfenic acid (-SOH) intermediate of the active site.

The protein belongs to the peroxiredoxin family. AhpC/Prx1 subfamily. As to quaternary structure, homodimer; disulfide-linked, upon oxidation. 5 homodimers assemble to form a ring-like decamer. Can form heterodimers with PRDX1. The enzyme can be inactivated by further oxidation of the cysteine sulfenic acid (C(P)-SOH) to sulphinic acid (C(P)-SO2H) and sulphonic acid (C(P)-SO3H) instead of its condensation to a disulfide bond.

The protein resides in the cytoplasm. It is found in the endoplasmic reticulum. The catalysed reaction is a hydroperoxide + [thioredoxin]-dithiol = an alcohol + [thioredoxin]-disulfide + H2O. Functionally, thiol-specific peroxidase that catalyzes the reduction of hydrogen peroxide and organic hydroperoxides to water and alcohols, respectively. Plays a role in cell protection against oxidative stress by detoxifying peroxides and as sensor of hydrogen peroxide-mediated signaling events. Regulates the activation of NF-kappa-B in the cytosol by a modulation of I-kappa-B-alpha phosphorylation. The polypeptide is Peroxiredoxin-4 (PRDX4) (Homo sapiens (Human)).